We begin with the raw amino-acid sequence, 199 residues long: MATLLQIKSSLFGDNGNSSQLANEFVERWKTQNPNGEVVIRDFAKEDVPHLDATRVQALFTPAEQRTAEQQAVVEYSDKIIAEIQAADAIVLGVPLYNFGIPSTLKAYFDHIARAGVTFKYTETGPVGLLTDKPVYILAARGGIYKGQPSDTQSRYLVDFLNFVGLKDIHFIYAEGLNMGQKDQAFASAKHEIEQEIAA.

Serine 10 is a binding site for FMN.

The protein belongs to the azoreductase type 1 family. Homodimer. FMN is required as a cofactor.

It catalyses the reaction 2 a quinone + NADH + H(+) = 2 a 1,4-benzosemiquinone + NAD(+). It carries out the reaction N,N-dimethyl-1,4-phenylenediamine + anthranilate + 2 NAD(+) = 2-(4-dimethylaminophenyl)diazenylbenzoate + 2 NADH + 2 H(+). Quinone reductase that provides resistance to thiol-specific stress caused by electrophilic quinones. Its function is as follows. Also exhibits azoreductase activity. Catalyzes the reductive cleavage of the azo bond in aromatic azo compounds to the corresponding amines. The protein is FMN-dependent NADH:quinone oxidoreductase of Cellvibrio japonicus (strain Ueda107) (Pseudomonas fluorescens subsp. cellulosa).